Reading from the N-terminus, the 258-residue chain is Synapse differentiation-inducing gene protein 1 (258 aa).

The Cytoplasmic segment spans residues 1–181 (MAGVVEQKSG…NFLVMPPRDH (181 aa)). A Phosphoserine modification is found at S137. Residues 182–202 (LGLSVFSMLCCFWPLGIAAFY) traverse the membrane as a helical segment. The Extracellular portion of the chain corresponds to 203-228 (LSHETNKAVAKGDFHQASTSSRRALF). An intramembrane region (helical) is located at residues 229 to 249 (LAVLSITIGTGIYVGVAVALI). Residues 250–258 (AYLSKSNHL) are Extracellular-facing.

This sequence belongs to the CD225/Dispanin family. As to quaternary structure, homodimer. Interacts with GRIA1 and GRIA2.

Its subcellular location is the cell membrane. The protein localises to the early endosome membrane. It localises to the postsynaptic density membrane. The protein resides in the synapse. It is found in the cell projection. Its subcellular location is the dendrite. The protein localises to the dendritic spine. Its function is as follows. May regulate AMPA receptor content at nascent synapses, and have a role in postsynaptic development and maturation. The chain is Synapse differentiation-inducing gene protein 1 (SYNDIG1) from Bos taurus (Bovine).